The primary structure comprises 403 residues: RNA-binding motif, single-stranded-interacting protein 1 (403 aa).

The segment at 30-56 is disordered; it reads PAHPMAPPSPSTTSSNNNSSSSSNSGW. The segment covering 40–54 has biased composition (low complexity); sequence STTSSNNNSSSSSNS. 2 consecutive RRM domains span residues 62-135 and 141-226; these read TNLY…MAKQ and TNLY…FADG. Residue threonine 208 is modified to Phosphothreonine.

The protein localises to the nucleus. In terms of biological role, single-stranded DNA binding protein that interacts with the region upstream of the MYC gene. Binds specifically to the DNA sequence motif 5'-[AT]CT[AT][AT]T-3'. Probably has a role in DNA replication. This is RNA-binding motif, single-stranded-interacting protein 1 from Rattus norvegicus (Rat).